The primary structure comprises 354 residues: Phosphoribosylformylglycinamidine cyclo-ligase (354 aa).

The protein belongs to the AIR synthase family.

It is found in the cytoplasm. The catalysed reaction is 2-formamido-N(1)-(5-O-phospho-beta-D-ribosyl)acetamidine + ATP = 5-amino-1-(5-phospho-beta-D-ribosyl)imidazole + ADP + phosphate + H(+). It functions in the pathway purine metabolism; IMP biosynthesis via de novo pathway; 5-amino-1-(5-phospho-D-ribosyl)imidazole from N(2)-formyl-N(1)-(5-phospho-D-ribosyl)glycinamide: step 2/2. The sequence is that of Phosphoribosylformylglycinamidine cyclo-ligase from Marinobacter nauticus (strain ATCC 700491 / DSM 11845 / VT8) (Marinobacter aquaeolei).